Consider the following 221-residue polypeptide: 7-cyano-7-deazaguanine synthase (221 aa).

10–20 contributes to the ATP binding site; that stretch reads FSGGQDSTTCL. Zn(2+)-binding residues include Cys186, Cys195, Cys198, and Cys201.

The protein belongs to the QueC family. Homodimer. It depends on Zn(2+) as a cofactor.

The catalysed reaction is 7-carboxy-7-deazaguanine + NH4(+) + ATP = 7-cyano-7-deazaguanine + ADP + phosphate + H2O + H(+). It functions in the pathway purine metabolism; 7-cyano-7-deazaguanine biosynthesis. Catalyzes the ATP-dependent conversion of 7-carboxy-7-deazaguanine (CDG) to 7-cyano-7-deazaguanine (preQ(0)). The protein is 7-cyano-7-deazaguanine synthase of Anoxybacillus flavithermus (strain DSM 21510 / WK1).